We begin with the raw amino-acid sequence, 249 residues long: Elongation factor Ts (249 aa).

An involved in Mg(2+) ion dislocation from EF-Tu region spans residues 82–85 (TDFV). The segment at 215–249 (QAGQLAPEAESTTETADATSETTTEKSSAKKKKKK) is disordered. Over residues 222 to 236 (EAESTTETADATSET) the composition is skewed to low complexity.

This sequence belongs to the EF-Ts family.

Its subcellular location is the cytoplasm. Its function is as follows. Associates with the EF-Tu.GDP complex and induces the exchange of GDP to GTP. It remains bound to the aminoacyl-tRNA.EF-Tu.GTP complex up to the GTP hydrolysis stage on the ribosome. The sequence is that of Elongation factor Ts from Rippkaea orientalis (strain PCC 8801 / RF-1) (Cyanothece sp. (strain PCC 8801)).